A 226-amino-acid chain; its full sequence is ATP synthase F(0) complex subunit a (226 aa).

6 helical membrane-spanning segments follow: residues 12 to 32 (PTMM…ILFP), 68 to 88 (WALM…LGLL), 97 to 117 (QLSM…ITGF), 138 to 158 (IPML…ALAV), 164 to 184 (ITAG…LMDI), and 189 to 209 (AFIT…VALI).

The protein belongs to the ATPase A chain family. Component of the ATP synthase complex composed at least of ATP5F1A/subunit alpha, ATP5F1B/subunit beta, ATP5MC1/subunit c (homooctomer), MT-ATP6/subunit a, MT-ATP8/subunit 8, ATP5ME/subunit e, ATP5MF/subunit f, ATP5MG/subunit g, ATP5MK/subunit k, ATP5MJ/subunit j, ATP5F1C/subunit gamma, ATP5F1D/subunit delta, ATP5F1E/subunit epsilon, ATP5PF/subunit F6, ATP5PB/subunit b, ATP5PD/subunit d, ATP5PO/subunit OSCP. ATP synthase complex consists of a soluble F(1) head domain (subunits alpha(3) and beta(3)) - the catalytic core - and a membrane F(0) domain - the membrane proton channel (subunits c, a, 8, e, f, g, k and j). These two domains are linked by a central stalk (subunits gamma, delta, and epsilon) rotating inside the F1 region and a stationary peripheral stalk (subunits F6, b, d, and OSCP). Interacts with DNAJC30; interaction is direct.

The protein resides in the mitochondrion inner membrane. The enzyme catalyses H(+)(in) = H(+)(out). Subunit a, of the mitochondrial membrane ATP synthase complex (F(1)F(0) ATP synthase or Complex V) that produces ATP from ADP in the presence of a proton gradient across the membrane which is generated by electron transport complexes of the respiratory chain. ATP synthase complex consist of a soluble F(1) head domain - the catalytic core - and a membrane F(1) domain - the membrane proton channel. These two domains are linked by a central stalk rotating inside the F(1) region and a stationary peripheral stalk. During catalysis, ATP synthesis in the catalytic domain of F(1) is coupled via a rotary mechanism of the central stalk subunits to proton translocation. With the subunit c (ATP5MC1), forms the proton-conducting channel in the F(0) domain, that contains two crucial half-channels (inlet and outlet) that facilitate proton movement from the mitochondrial intermembrane space (IMS) into the matrix. Protons are taken up via the inlet half-channel and released through the outlet half-channel, following a Grotthuss mechanism. The sequence is that of ATP synthase F(0) complex subunit a from Halichoerus grypus (Gray seal).